Here is a 109-residue protein sequence, read N- to C-terminus: Protein ripply2 (109 aa).

The span at 1–15 (MENITFTSGLNSEMD) shows a compositional bias: polar residues. Disordered stretches follow at residues 1–42 (MENI…RPAD) and 88–109 (YEDP…KELR). The WRPW motif signature appears at 20–23 (WRPW). The span at 30 to 42 (KAPDYKPYKRPAD) shows a compositional bias: basic and acidic residues. The segment at 53 to 88 (HPVKLFWPKSQCFDYLYEDAEVLLRNYPVQATICLY) is ripply homology domain. The span at 89–109 (EDPDTEDEEDYSDEEDEKELR) shows a compositional bias: acidic residues.

The protein belongs to the ripply family. As to expression, first expressed in the paraxial mesoderm at the 90% epiboly stage, and subsequently confined to the presomitic mesoderm. Expressed in the rostral compartment of S-I and S-II.

It localises to the nucleus. In terms of biological role, plays a role in somitogenesis. Required for somite segregation and establishment of rostrocaudal polarity in somites. In Danio rerio (Zebrafish), this protein is Protein ripply2.